The sequence spans 317 residues: NAC domain-containing protein 19 (317 aa).

In terms of domain architecture, NAC spans 14-162 (LPPGFRFYPT…DWVLCRIYKK (149 aa)).

Dimer. Interacts with RHA2A, RHA2B or RHG1A, but not with RHA3A or RHA3B. In terms of tissue distribution, expressed in stems, flowers, cauline leaves and rosettes.

It is found in the nucleus. Its function is as follows. Transcription factors that bind specifically to the 5'-CATGTG-3' motif. The sequence is that of NAC domain-containing protein 19 (NAC019) from Arabidopsis thaliana (Mouse-ear cress).